A 312-amino-acid polypeptide reads, in one-letter code: DNA-directed RNA polymerase subunit alpha (312 aa).

The tract at residues 1–226 (MIEFEKPKIT…DHLNLFVDLS (226 aa)) is alpha N-terminal domain (alpha-NTD). The segment at 243-312 (TERVLDKIIE…ELGLSLKKRK (70 aa)) is alpha C-terminal domain (alpha-CTD).

The protein belongs to the RNA polymerase alpha chain family. In terms of assembly, homodimer. The RNAP catalytic core consists of 2 alpha, 1 beta, 1 beta' and 1 omega subunit. When a sigma factor is associated with the core the holoenzyme is formed, which can initiate transcription.

It catalyses the reaction RNA(n) + a ribonucleoside 5'-triphosphate = RNA(n+1) + diphosphate. Its function is as follows. DNA-dependent RNA polymerase catalyzes the transcription of DNA into RNA using the four ribonucleoside triphosphates as substrates. The sequence is that of DNA-directed RNA polymerase subunit alpha from Lactococcus lactis subsp. cremoris (strain SK11).